Here is a 78-residue protein sequence, read N- to C-terminus: UPF0612 protein new22 (78 aa).

This sequence belongs to the UPF0612 family.

The chain is UPF0612 protein new22 (new22) from Schizosaccharomyces pombe (strain 972 / ATCC 24843) (Fission yeast).